We begin with the raw amino-acid sequence, 160 residues long: Ribosomal RNA large subunit methyltransferase H (160 aa).

Residues Gly-108 and 127–132 (FGLMTW) contribute to the S-adenosyl-L-methionine site.

This sequence belongs to the RNA methyltransferase RlmH family. As to quaternary structure, homodimer.

The protein localises to the cytoplasm. The enzyme catalyses pseudouridine(1915) in 23S rRNA + S-adenosyl-L-methionine = N(3)-methylpseudouridine(1915) in 23S rRNA + S-adenosyl-L-homocysteine + H(+). Functionally, specifically methylates the pseudouridine at position 1915 (m3Psi1915) in 23S rRNA. The polypeptide is Ribosomal RNA large subunit methyltransferase H (Bartonella bacilliformis (strain ATCC 35685 / KC583 / Herrer 020/F12,63)).